A 659-amino-acid chain; its full sequence is UvrABC system protein B (659 aa).

The Helicase ATP-binding domain occupies 25–182; the sequence is QSIENGNRGQ…KKLIEIQYER (158 aa). 38-45 provides a ligand contact to ATP; that stretch reads GVTGSGKT. The short motif at 91–114 is the Beta-hairpin element; that stretch reads YYDYYQPEAYVPQTDTFIEKDASI. Positions 429-582 constitute a Helicase C-terminal domain; it reads QIDDLYGEIQ…QMEYNEEHNI (154 aa). Positions 622–657 constitute a UVR domain; that stretch reads EKLIEQYEEEMKEAAKNLQFERAAELRDIIKDLKEN.

It belongs to the UvrB family. In terms of assembly, forms a heterotetramer with UvrA during the search for lesions. Interacts with UvrC in an incision complex.

The protein localises to the cytoplasm. The UvrABC repair system catalyzes the recognition and processing of DNA lesions. A damage recognition complex composed of 2 UvrA and 2 UvrB subunits scans DNA for abnormalities. Upon binding of the UvrA(2)B(2) complex to a putative damaged site, the DNA wraps around one UvrB monomer. DNA wrap is dependent on ATP binding by UvrB and probably causes local melting of the DNA helix, facilitating insertion of UvrB beta-hairpin between the DNA strands. Then UvrB probes one DNA strand for the presence of a lesion. If a lesion is found the UvrA subunits dissociate and the UvrB-DNA preincision complex is formed. This complex is subsequently bound by UvrC and the second UvrB is released. If no lesion is found, the DNA wraps around the other UvrB subunit that will check the other stand for damage. In Clostridium perfringens (strain SM101 / Type A), this protein is UvrABC system protein B.